A 482-amino-acid polypeptide reads, in one-letter code: GDP-D-glucose phosphorylase 1 (482 aa).

The tract at residues 1–21 (MEPFPRILDDRLPRNMRRPRP) is disordered. Residue histidine 255 is the Tele-GMP-histidine intermediate of the active site. The disordered stretch occupies residues 461–482 (MPRSPSIRHRSSTRAQSDEGSK).

This sequence belongs to the GDPGP1 family. Expressed throughout the neuronal system, in the spermatheca and anterior hypodermal cells.

The protein resides in the cytoplasm. It catalyses the reaction GDP-alpha-D-glucose + phosphate = alpha-D-glucose 1-phosphate + GDP + H(+). In terms of biological role, specific and highly efficient GDP-D-glucose phosphorylase regulating the levels of GDP-D-glucose in cells. The protein is GDP-D-glucose phosphorylase 1 of Caenorhabditis elegans.